Consider the following 708-residue polypeptide: Lactotransferrin (708 aa).

The signal sequence occupies residues 1 to 19 (MKLFVPALLSLGALGLCLA). 2 Transferrin-like domains span residues 25–352 (VRWC…NLRE) and 364–693 (VVWC…NLKK). 2 cysteine pairs are disulfide-bonded: cysteine 28/cysteine 64 and cysteine 38/cysteine 55. Aspartate 79 contributes to the Fe(3+) binding site. Lysine 92 is an active-site residue. Tyrosine 111 lines the Fe(3+) pocket. Disulfide bonds link cysteine 134/cysteine 217, cysteine 176/cysteine 192, cysteine 179/cysteine 202, cysteine 189/cysteine 200, and cysteine 250/cysteine 264. Arginine 140, alanine 142, and glycine 143 together coordinate hydrogencarbonate. Residue tyrosine 211 participates in Fe(3+) binding. An N-linked (GlcNAc...) (high mannose) asparagine glycan is attached at asparagine 252. Position 272 (histidine 272) interacts with Fe(3+). The active-site Nucleophile is the serine 278. Residue asparagine 300 is glycosylated (N-linked (GlcNAc...) asparagine). 2 cysteine pairs are disulfide-bonded: cysteine 367–cysteine 399 and cysteine 377–cysteine 390. N-linked (GlcNAc...) (complex) asparagine; alternate glycosylation is present at asparagine 387. Residue asparagine 387 is glycosylated (N-linked (GlcNAc...) (high mannose) asparagine; alternate). An N-linked (GlcNAc...) (hybrid) asparagine; alternate glycan is attached at asparagine 387. 2 residues coordinate Fe(3+): aspartate 414 and tyrosine 452. Intrachain disulfides connect cysteine 424–cysteine 703, cysteine 444–cysteine 666, cysteine 476–cysteine 551, cysteine 500–cysteine 694, cysteine 510–cysteine 524, cysteine 521–cysteine 534, cysteine 592–cysteine 606, and cysteine 644–cysteine 649. Residues threonine 478, arginine 482, alanine 484, and glycine 485 each coordinate hydrogencarbonate. Asparagine 495 is a glycosylation site (N-linked (GlcNAc...) (complex) asparagine; alternate). Asparagine 495 is a glycosylation site (N-linked (GlcNAc...) (high mannose) asparagine; alternate). A glycan (N-linked (GlcNAc...) (hybrid) asparagine; alternate) is linked at asparagine 495. Fe(3+) is bound at residue tyrosine 545. Asparagine 564 is a glycosylation site (N-linked (GlcNAc...) (high mannose) asparagine). Residue histidine 614 participates in Fe(3+) binding.

Belongs to the transferrin family. Monomer. Found in a complex with LTF, CLU, EPPIN and SEMG1. Found in a complex with MPO and LTF; interacts directly with CP, allows Fe(3+) incorporation into LTF and activation of CP ferroxidase activity. Post-translationally, poly-N-acetyllactosaminic carbohydrate moiety seems to be needed for TLR4 activation.

Its subcellular location is the secreted. It is found in the cytoplasmic granule. In terms of biological role, transferrins are iron binding transport proteins which can bind two Fe(3+) ions in association with the binding of an anion, usually bicarbonate. Functionally, major iron-binding and multifunctional protein found in exocrine fluids such as breast milk and mucosal secretions. Has antimicrobial activity, which depends on the extracellular cation concentration. Antimicrobial properties include bacteriostasis, which is related to its ability to sequester free iron and thus inhibit microbial growth, as well as direct bactericidal properties leading to the release of lipopolysaccharides from the bacterial outer membrane. Can also prevent bacterial biofilm development in P.aeruginosa infection. Has weak antifungal activity against C.albicans. Has anabolic, differentiating and anti-apoptotic effects on osteoblasts and can also inhibit osteoclastogenesis, possibly playing a role in the regulation of bone growth. Promotes binding of species C adenoviruses to epithelial cells, promoting adenovirus infection. Can inhibit papillomavirus infections. Stimulates the TLR4 signaling pathway leading to NF-kappa-B activation and subsequent pro-inflammatory cytokine production while also interfering with the lipopolysaccharide (LPS)-stimulated TLR4 signaling. Inhibits neutrophil granulocyte migration to sites of apoptosis, when secreted by apoptotic cells. Stimulates VEGFA-mediated endothelial cell migration and proliferation. Binds heparin, chondroitin sulfate and possibly other glycosaminoglycans (GAGs). Also binds specifically to pneumococcal surface protein A (PspA), the lipid A portion of bacterial lipopolysaccharide (LPS), lysozyme and DNA. Lactoferricin binds to the bacterial surface and is crucial for the bactericidal functions. Has some antiviral activity against papillomavirus infection. N-terminal region shows strong antifungal activity against C.albicans. Contains two BBXB heparin-binding consensus sequences that appear to form the predominate functional GAG-binding site. Its function is as follows. The lactotransferrin transferrin-like domain 1 functions as a serine protease of the peptidase S60 family that cuts arginine rich regions. This function contributes to the antimicrobial activity. Shows a preferential cleavage at -Arg-Ser-Arg-Arg-|- and -Arg-Arg-Ser-Arg-|-, and of Z-Phe-Arg-|-aminomethylcoumarin sites. In Capra hircus (Goat), this protein is Lactotransferrin (LTF).